Here is a 392-residue protein sequence, read N- to C-terminus: ATP phosphoribosyltransferase regulatory subunit (392 aa).

The protein belongs to the class-II aminoacyl-tRNA synthetase family. HisZ subfamily. In terms of assembly, heteromultimer composed of HisG and HisZ subunits.

The protein localises to the cytoplasm. The protein operates within amino-acid biosynthesis; L-histidine biosynthesis; L-histidine from 5-phospho-alpha-D-ribose 1-diphosphate: step 1/9. Functionally, required for the first step of histidine biosynthesis. May allow the feedback regulation of ATP phosphoribosyltransferase activity by histidine. This Marinomonas sp. (strain MWYL1) protein is ATP phosphoribosyltransferase regulatory subunit.